The primary structure comprises 489 residues: Glutamate--tRNA ligase (489 aa).

The 'HIGH' region signature appears at 12–22 (PSPTGIPHVGM). The 'KMSKS' region signature appears at 256–260 (KLSKR). Residue Lys-259 participates in ATP binding.

This sequence belongs to the class-I aminoacyl-tRNA synthetase family. Glutamate--tRNA ligase type 1 subfamily. Monomer.

The protein localises to the cytoplasm. It carries out the reaction tRNA(Glu) + L-glutamate + ATP = L-glutamyl-tRNA(Glu) + AMP + diphosphate. Functionally, catalyzes the attachment of glutamate to tRNA(Glu) in a two-step reaction: glutamate is first activated by ATP to form Glu-AMP and then transferred to the acceptor end of tRNA(Glu). The sequence is that of Glutamate--tRNA ligase from Mycobacterium ulcerans (strain Agy99).